The following is a 65-amino-acid chain: Large ribosomal subunit protein bL35 (65 aa).

The tract at residues 28–53 (NGSHNLEKKNRKRTRRLHQSTMLDNA) is disordered. The span at 36–45 (KNRKRTRRLH) shows a compositional bias: basic residues.

It belongs to the bacterial ribosomal protein bL35 family.

This chain is Large ribosomal subunit protein bL35, found in Chlorobium luteolum (strain DSM 273 / BCRC 81028 / 2530) (Pelodictyon luteolum).